The chain runs to 860 residues: Anoctamin-7 (860 aa).

Residues Met1–Gly297 lie on the Cytoplasmic side of the membrane. The tract at residues Asn24 to Ser50 is disordered. A helical membrane pass occupies residues Trp298 to Phe318. Residues Ser319–His362 lie on the Extracellular side of the membrane. A helical transmembrane segment spans residues Gly363 to Trp383. Residues Lys384–Ala441 lie on the Cytoplasmic side of the membrane. The helical transmembrane segment at Gly442 to Leu462 threads the bilayer. Residues Tyr463 to Ser492 lie on the Extracellular side of the membrane. The helical transmembrane segment at Val493–Leu513 threads the bilayer. Residues Thr514–Thr530 are Cytoplasmic-facing. The helical transmembrane segment at Leu531–Phe551 threads the bilayer. Residues Lys552 to Gln652 lie on the Extracellular side of the membrane. Residues Phe653–Asn673 traverse the membrane as a helical segment. Residues Asn674–Gly701 lie on the Cytoplasmic side of the membrane. The chain crosses the membrane as a helical span at residues Ile702–Leu722. Topologically, residues Ala723 to Pro779 are extracellular. Residues Asn747 and Asn762 are each glycosylated (N-linked (GlcNAc...) asparagine). The helical transmembrane segment at Thr780 to Phe800 threads the bilayer. Residues Ser801–Ala860 are Cytoplasmic-facing.

Belongs to the anoctamin family.

The protein resides in the cell membrane. It localises to the endoplasmic reticulum. It carries out the reaction a 1,2-diacyl-sn-glycero-3-phospho-L-serine(in) = a 1,2-diacyl-sn-glycero-3-phospho-L-serine(out). The catalysed reaction is a beta-D-galactosyl-(1&lt;-&gt;1')-N-acylsphing-4-enine(out) = a beta-D-galactosyl-(1&lt;-&gt;1')-N-acylsphing-4-enine(in). It catalyses the reaction a 1,2-diacyl-sn-glycero-3-phosphocholine(in) = a 1,2-diacyl-sn-glycero-3-phosphocholine(out). Its function is as follows. Has calcium-dependent phospholipid scramblase activity; scrambles phosphatidylserine, phosphatidylcholine and galactosylceramide. Does not exhibit calcium-activated chloride channel (CaCC) activity. May play a role in cell-cell interactions. This Rattus norvegicus (Rat) protein is Anoctamin-7 (Ano7).